A 241-amino-acid chain; its full sequence is GLIPR1-like protein 1 (241 aa).

A signal peptide spans 1–22; the sequence is MILRKKLSYLWTLGLCLVASKS. Residues 39-172 form the SCP domain; that stretch reads LRLHNEARTN…PDSALLVCNY (134 aa). Residue Ser220 is the site of GPI-anchor amidated serine attachment. Residues 221-241 constitute a propeptide, removed in mature form; the sequence is GTRQLIACNPLYLISVLLTIF.

This sequence belongs to the CRISP family. Part of a oolemmal binding multimeric complex (IZUMO1 complex) composed at least of IZUMO1 and GLIPR1L1; the complex assemblage is influenced by the maturation status of the male germ cell. Interacts with IZUMO1. N-glycosylated. N-glycosylation decreases during the transit in the caput. As to expression, highly expressed in testis, where it localizes to round and elongating spermatids and differentiated spermatozoa in the seminiferous tubules and epididymis (at protein level).

It is found in the cytoplasmic vesicle. Its subcellular location is the secretory vesicle. It localises to the acrosome. The protein resides in the cell membrane. The protein localises to the membrane raft. In terms of biological role, required for optimal fertilization at the stage of sperm-oocyte fusion, plays a role in optimizing acrosome function, the translocation of IZUMO1 during the acrosome reaction and the fertilization process. Component of epididymosomes, one type of membranous microvesicules which mediate the transfer of lipids and proteins to spermatozoa plasma membrane during epididymal maturation. Also a component of the CD9-positive microvesicules found in the cauda region. This is GLIPR1-like protein 1 from Bos taurus (Bovine).